The sequence spans 124 residues: UPF0102 protein Meso_4010 (124 aa).

It belongs to the UPF0102 family.

The protein is UPF0102 protein Meso_4010 of Chelativorans sp. (strain BNC1).